We begin with the raw amino-acid sequence, 203 residues long: Holliday junction branch migration complex subunit RuvA (203 aa).

The tract at residues 1–64 (MFAYFRGRLT…EDAFLLYGFS (64 aa)) is domain I. Residues 65 to 143 (SESERQLFRL…KMSPDGGKTI (79 aa)) are domain II. A flexible linker region spans residues 144-150 (ASGSGGN). Positions 151-203 (LALQIKDDALNALITLGFSKPAAQKAVTGILEGNPSLSVEEVVKSALVSIHNS) are domain III.

Belongs to the RuvA family. As to quaternary structure, homotetramer. Forms an RuvA(8)-RuvB(12)-Holliday junction (HJ) complex. HJ DNA is sandwiched between 2 RuvA tetramers; dsDNA enters through RuvA and exits via RuvB. An RuvB hexamer assembles on each DNA strand where it exits the tetramer. Each RuvB hexamer is contacted by two RuvA subunits (via domain III) on 2 adjacent RuvB subunits; this complex drives branch migration. In the full resolvosome a probable DNA-RuvA(4)-RuvB(12)-RuvC(2) complex forms which resolves the HJ.

It is found in the cytoplasm. Functionally, the RuvA-RuvB-RuvC complex processes Holliday junction (HJ) DNA during genetic recombination and DNA repair, while the RuvA-RuvB complex plays an important role in the rescue of blocked DNA replication forks via replication fork reversal (RFR). RuvA specifically binds to HJ cruciform DNA, conferring on it an open structure. The RuvB hexamer acts as an ATP-dependent pump, pulling dsDNA into and through the RuvAB complex. HJ branch migration allows RuvC to scan DNA until it finds its consensus sequence, where it cleaves and resolves the cruciform DNA. The polypeptide is Holliday junction branch migration complex subunit RuvA (Chlorobium limicola (strain DSM 245 / NBRC 103803 / 6330)).